Consider the following 329-residue polypeptide: Holliday junction branch migration complex subunit RuvB (329 aa).

Residues 1 to 180 (MKNILQSTEC…FGIPIHLEFY (180 aa)) form a large ATPase domain (RuvB-L) region. Residues R20, G61, K64, T65, T66, 127–129 (EDF), R170, Y180, and R217 each bind ATP. T65 contacts Mg(2+). Residues 181-252 (STEELTKVIQ…FADKALLRLG (72 aa)) are small ATPAse domain (RuvB-S). Positions 255–329 (KLGLDRQDIQ…ISHLREQEYI (75 aa)) are head domain (RuvB-H). R308 and R313 together coordinate DNA.

It belongs to the RuvB family. Homohexamer. Forms an RuvA(8)-RuvB(12)-Holliday junction (HJ) complex. HJ DNA is sandwiched between 2 RuvA tetramers; dsDNA enters through RuvA and exits via RuvB. An RuvB hexamer assembles on each DNA strand where it exits the tetramer. Each RuvB hexamer is contacted by two RuvA subunits (via domain III) on 2 adjacent RuvB subunits; this complex drives branch migration. In the full resolvosome a probable DNA-RuvA(4)-RuvB(12)-RuvC(2) complex forms which resolves the HJ.

It localises to the cytoplasm. The catalysed reaction is ATP + H2O = ADP + phosphate + H(+). The RuvA-RuvB-RuvC complex processes Holliday junction (HJ) DNA during genetic recombination and DNA repair, while the RuvA-RuvB complex plays an important role in the rescue of blocked DNA replication forks via replication fork reversal (RFR). RuvA specifically binds to HJ cruciform DNA, conferring on it an open structure. The RuvB hexamer acts as an ATP-dependent pump, pulling dsDNA into and through the RuvAB complex. RuvB forms 2 homohexamers on either side of HJ DNA bound by 1 or 2 RuvA tetramers; 4 subunits per hexamer contact DNA at a time. Coordinated motions by a converter formed by DNA-disengaged RuvB subunits stimulates ATP hydrolysis and nucleotide exchange. Immobilization of the converter enables RuvB to convert the ATP-contained energy into a lever motion, pulling 2 nucleotides of DNA out of the RuvA tetramer per ATP hydrolyzed, thus driving DNA branch migration. The RuvB motors rotate together with the DNA substrate, which together with the progressing nucleotide cycle form the mechanistic basis for DNA recombination by continuous HJ branch migration. Branch migration allows RuvC to scan DNA until it finds its consensus sequence, where it cleaves and resolves cruciform DNA. This chain is Holliday junction branch migration complex subunit RuvB, found in Ehrlichia chaffeensis (strain ATCC CRL-10679 / Arkansas).